Here is a 337-residue protein sequence, read N- to C-terminus: Probable dihydroorotase (337 aa).

Zn(2+) is bound by residues histidine 12, histidine 14, lysine 95, histidine 132, histidine 170, and aspartate 240. The residue at position 95 (lysine 95) is an N6-carboxylysine.

This sequence belongs to the metallo-dependent hydrolases superfamily. DHOase family. Class II DHOase subfamily. Zn(2+) is required as a cofactor.

The catalysed reaction is (S)-dihydroorotate + H2O = N-carbamoyl-L-aspartate + H(+). It functions in the pathway pyrimidine metabolism; UMP biosynthesis via de novo pathway; (S)-dihydroorotate from bicarbonate: step 3/3. In Schizosaccharomyces pombe (strain 972 / ATCC 24843) (Fission yeast), this protein is Probable dihydroorotase (ura2).